The chain runs to 900 residues: DNA polymerase nu (900 aa).

Positions L60–S75 are enriched in basic and acidic residues. 2 disordered regions span residues L60–Q90 and G863–L900. Over residues L76–Q90 the composition is skewed to polar residues.

The protein belongs to the DNA polymerase type-A family. Interacts with FANCD2, FANCI, PCNA, RAD51 and HELQ. Highly expressed in testis and heart. Weakly expressed in skeletal muscle.

The protein localises to the nucleus. The enzyme catalyses DNA(n) + a 2'-deoxyribonucleoside 5'-triphosphate = DNA(n+1) + diphosphate. With respect to regulation, inhibited by ddTTP. Its function is as follows. DNA polymerase with very low fidelity that catalyzes considerable misincorporation by inserting dTTP opposite a G template, and dGTP opposite a T template. Is the least accurate of the DNA polymerase A family (i.e. POLG, POLN and POLQ). Can perform accurate translesion DNA synthesis (TLS) past a 5S-thymine glycol. Can perform efficient strand displacement past a nick or a gap and gives rise to an amount of product similar to that on non-damaged template. Has no exonuclease activity. Error-prone DNA polymerase that preferentially misincorporates dT regardless of template sequence. May play a role in TLS during interstrand cross-link (ICL) repair. May be involved in TLS when genomic replication is blocked by extremely large major groove DNA lesions. May function in the bypass of some DNA-protein and DNA-DNA cross-links. May have a role in cellular tolerance to DNA cross-linking agents. Involved in the repair of DNA cross-links and double-strand break (DSB) resistance. Participates in FANCD2-mediated repair. Forms a complex with HELQ helicase that participates in homologous recombination (HR) repair and is essential for cellular protection against DNA cross-links. The chain is DNA polymerase nu (POLN) from Homo sapiens (Human).